The sequence spans 354 residues: Guanine nucleotide-binding protein G(q) subunit alpha (354 aa).

2 S-palmitoyl cysteine lipidation sites follow: Cys-3 and Cys-4. A G-alpha domain is found at 32 to 354 (RELKLLLLGT…QLNLKEYNLV (323 aa)). The segment at 35–48 (KLLLLGTGESGKST) is G1 motif. GTP contacts are provided by residues 40-47 (GTGESGKS), 174-180 (LRVRVPT), 199-203 (DVGGQ), 269-272 (NKKD), and Ala-326. Residues Ser-47 and Thr-180 each contribute to the Mg(2+) site. The tract at residues 172–180 (DILRVRVPT) is G2 motif. Residues 195–204 (FRMVDVGGQR) form a G3 motif region. The segment at 265–272 (ILFLNKKD) is G4 motif. The tract at residues 324–329 (TCATDT) is G5 motif.

Belongs to the G-alpha family. G(q) subfamily. G proteins are composed of 3 units; alpha, beta and gamma. The alpha chain contains the guanine nucleotide binding site. As to expression, a high concentration was found in the retinal light-sensitive outer segment.

Guanine nucleotide-binding proteins (G proteins) are involved as modulators or transducers in various transmembrane signaling systems. Its function is as follows. The G(q) alpha subunit is involved in the light-dependent activation of phospholipase C. The sequence is that of Guanine nucleotide-binding protein G(q) subunit alpha from Loligo forbesii (Veined squid).